The sequence spans 522 residues: U4/U6 small nuclear ribonucleoprotein Prp4 (522 aa).

Over residues 1-13 (MASSRASSTQATK) the composition is skewed to polar residues. Residues 1 to 20 (MASSRASSTQATKTKAPDDL) are disordered. At lysine 27 the chain carries N6-acetyllysine. 7 WD repeats span residues 229–268 (GDDRPISYCHFSPNSKMLATACWSGLCKLWSVPDCNLLHT), 271–318 (GHNT…PVAD), 321–360 (GHTVRVARVMWHPSGRFLGTTCYDRSWRLWDLEAQEEILH), 363–402 (GHSMGVYDIAFHQDGSLAGTGGLDAFGRVWDLRTGRCIMF), 405–444 (GHLKEIYGINFSPNGYHIATGSGDNTCKVWDLRQRRCVYT), 447–487 (AHQN…PLKT), and 490–521 (GHEGKVMGLDISSDGQLIATCSYDRTFKLWMA).

In terms of assembly, component of the precatalytic spliceosome (spliceosome B complex). Component of the U4/U6-U5 tri-snRNP complex, a building block of the precatalytic spliceosome (spliceosome B complex). The U4/U6-U5 tri-snRNP complex is composed of the U4, U6 and U5 snRNAs and at least PRPF3, PRPF4, PRPF6, PRPF8, PRPF31, SNRNP200, TXNL4A, SNRNP40, SNRPB, SNRPD1, SNRPD2, SNRPD3, SNRPE, SNRPF, SNRPG, DDX23, CD2BP2, PPIH, SNU13, EFTUD2, SART1 and USP39, plus LSM2, LSM3, LSM4, LSM5, LSM6, LSM7 and LSM8. Interacts directly with PRPF18, PPIH and PRPF3. Part of a heteromeric complex containing PPIH, PRPF3 and PRPF4 that is stable in the absence of RNA. Interacts with ERCC6.

It localises to the nucleus. It is found in the nucleus speckle. In terms of biological role, plays a role in pre-mRNA splicing as component of the U4/U6-U5 tri-snRNP complex that is involved in spliceosome assembly, and as component of the precatalytic spliceosome (spliceosome B complex). The polypeptide is U4/U6 small nuclear ribonucleoprotein Prp4 (PRPF4) (Homo sapiens (Human)).